We begin with the raw amino-acid sequence, 341 residues long: Aromatic amino acid aminotransferase (341 aa).

The residue at position 213 (Lys-213) is an N6-(pyridoxal phosphate)lysine.

The protein belongs to the class-II pyridoxal-phosphate-dependent aminotransferase family. As to quaternary structure, homodimer. The cofactor is pyridoxal 5'-phosphate.

It catalyses the reaction an aromatic L-alpha-amino acid + 2-oxoglutarate = an aromatic oxo-acid + L-glutamate. In terms of biological role, aminotransferase that catalyzes the conversion of aromatic amino acids and 2-oxoglutarate into corresponding aromatic oxo acids and L-glutamate. This is Aromatic amino acid aminotransferase from Corynebacterium glutamicum (strain R).